A 196-amino-acid chain; its full sequence is ATP-dependent Clp protease proteolytic subunit (196 aa).

The Nucleophile role is filled by serine 96. Histidine 121 is a catalytic residue.

Belongs to the peptidase S14 family. As to quaternary structure, fourteen ClpP subunits assemble into 2 heptameric rings which stack back to back to give a disk-like structure with a central cavity, resembling the structure of eukaryotic proteasomes.

It is found in the cytoplasm. The enzyme catalyses Hydrolysis of proteins to small peptides in the presence of ATP and magnesium. alpha-casein is the usual test substrate. In the absence of ATP, only oligopeptides shorter than five residues are hydrolyzed (such as succinyl-Leu-Tyr-|-NHMec, and Leu-Tyr-Leu-|-Tyr-Trp, in which cleavage of the -Tyr-|-Leu- and -Tyr-|-Trp bonds also occurs).. Cleaves peptides in various proteins in a process that requires ATP hydrolysis. Has a chymotrypsin-like activity. Plays a major role in the degradation of misfolded proteins. In Streptococcus sanguinis (strain SK36), this protein is ATP-dependent Clp protease proteolytic subunit.